A 101-amino-acid chain; its full sequence is Small ribosomal subunit protein uS14 (101 aa).

The protein belongs to the universal ribosomal protein uS14 family. In terms of assembly, part of the 30S ribosomal subunit. Contacts proteins S3 and S10.

Functionally, binds 16S rRNA, required for the assembly of 30S particles and may also be responsible for determining the conformation of the 16S rRNA at the A site. The protein is Small ribosomal subunit protein uS14 of Aeromonas hydrophila subsp. hydrophila (strain ATCC 7966 / DSM 30187 / BCRC 13018 / CCUG 14551 / JCM 1027 / KCTC 2358 / NCIMB 9240 / NCTC 8049).